A 152-amino-acid polypeptide reads, in one-letter code: Transcriptional repressor NrdR (152 aa).

Residues 3-34 (CCYCGHGESKVLETRSAEEGRVIRRRRECMEC) fold into a zinc finger. An ATP-cone domain is found at 49–139 (LIVRKKGGSL…VYRQFTDVGR (91 aa)).

It belongs to the NrdR family. It depends on Zn(2+) as a cofactor.

In terms of biological role, negatively regulates transcription of bacterial ribonucleotide reductase nrd genes and operons by binding to NrdR-boxes. This chain is Transcriptional repressor NrdR, found in Heliobacterium modesticaldum (strain ATCC 51547 / Ice1).